The following is a 160-amino-acid chain: uncharacterized protein (160 aa).

One can recognise a Cupin type-2 domain in the interval 37 to 110; it reads LMSLKPKEDI…TDYLKLYTIY (74 aa).

It localises to the virion. This is an uncharacterized protein from Acanthamoeba polyphaga mimivirus (APMV).